Reading from the N-terminus, the 164-residue chain is MVGVVSDDQDFLDSKDTMKMAVVLVTPLGNGDLALKFGYPTPHGGCQKMDTTFTEGAVPGQFSNPAMALSDIRVAFSDYQHFALLYLEMRKGGLRNQWLQLYGGRAAGRRPRHPRFGSGMSPLCLHQPFLHAEGGTAGSWCLWPRVPAPPCPSLPLFAPPAPSL.

The protein belongs to the calycin superfamily. Lipocalin family.

This Homo sapiens (Human) protein is Lipocalin-like 1 protein (LCNL1).